Consider the following 346-residue polypeptide: Inositol 2-dehydrogenase/D-chiro-inositol 3-dehydrogenase (346 aa).

Belongs to the Gfo/Idh/MocA family. As to quaternary structure, homotetramer.

It catalyses the reaction myo-inositol + NAD(+) = scyllo-inosose + NADH + H(+). The catalysed reaction is 1D-chiro-inositol + NAD(+) = scyllo-inosine + NADH + H(+). It functions in the pathway polyol metabolism; myo-inositol degradation into acetyl-CoA; acetyl-CoA from myo-inositol: step 1/7. Involved in the oxidation of myo-inositol (MI) and D-chiro-inositol (DCI) to 2-keto-myo-inositol (2KMI or 2-inosose) and 1-keto-D-chiro-inositol (1KDCI), respectively. The polypeptide is Inositol 2-dehydrogenase/D-chiro-inositol 3-dehydrogenase (Lacticaseibacillus casei (Lactobacillus casei)).